The following is a 419-amino-acid chain: UDP-N-acetylglucosamine 1-carboxyvinyltransferase (419 aa).

22–23 (KN) provides a ligand contact to phosphoenolpyruvate. UDP-N-acetyl-alpha-D-glucosamine is bound at residue Arg-91. The Proton donor role is filled by Cys-115. A 2-(S-cysteinyl)pyruvic acid O-phosphothioketal modification is found at Cys-115. Residues 120-124 (RPVDL), 160-163 (KVSV), Asp-305, and Val-327 each bind UDP-N-acetyl-alpha-D-glucosamine.

Belongs to the EPSP synthase family. MurA subfamily.

Its subcellular location is the cytoplasm. The enzyme catalyses phosphoenolpyruvate + UDP-N-acetyl-alpha-D-glucosamine = UDP-N-acetyl-3-O-(1-carboxyvinyl)-alpha-D-glucosamine + phosphate. It participates in cell wall biogenesis; peptidoglycan biosynthesis. Its function is as follows. Cell wall formation. Adds enolpyruvyl to UDP-N-acetylglucosamine. This is UDP-N-acetylglucosamine 1-carboxyvinyltransferase from Salmonella dublin (strain CT_02021853).